We begin with the raw amino-acid sequence, 446 residues long: Tubulin beta-6 chain (446 aa).

The short motif at 1 to 4 is the MREI motif element; that stretch reads MREI. Residues glutamine 11, glutamate 69, serine 138, glycine 142, threonine 143, and glycine 144 each coordinate GTP. Glutamate 69 is a Mg(2+) binding site. Phosphoserine; by CDK1 is present on serine 172. Residues asparagine 204 and asparagine 226 each coordinate GTP. Residue glutamate 438 is modified to 5-glutamyl polyglutamate.

This sequence belongs to the tubulin family. In terms of assembly, dimer of alpha and beta chains. A typical microtubule is a hollow water-filled tube with an outer diameter of 25 nm and an inner diameter of 15 nM. Alpha-beta heterodimers associate head-to-tail to form protofilaments running lengthwise along the microtubule wall with the beta-tubulin subunit facing the microtubule plus end conferring a structural polarity. Microtubules usually have 13 protofilaments but different protofilament numbers can be found in some organisms and specialized cells. Requires Mg(2+) as cofactor. Post-translationally, some glutamate residues at the C-terminus are polyglycylated, resulting in polyglycine chains on the gamma-carboxyl group. Glycylation is mainly limited to tubulin incorporated into axonemes (cilia and flagella) whereas glutamylation is prevalent in neuronal cells, centrioles, axonemes, and the mitotic spindle. Both modifications can coexist on the same protein on adjacent residues, and lowering polyglycylation levels increases polyglutamylation, and reciprocally. Cilia and flagella glycylation is required for their stability and maintenance. Flagella glycylation controls sperm motility. Some glutamate residues at the C-terminus are polyglutamylated, resulting in polyglutamate chains on the gamma-carboxyl group. Polyglutamylation plays a key role in microtubule severing by spastin (SPAST). SPAST preferentially recognizes and acts on microtubules decorated with short polyglutamate tails: severing activity by SPAST increases as the number of glutamates per tubulin rises from one to eight, but decreases beyond this glutamylation threshold. Glutamylation is also involved in cilia motility. In terms of processing, phosphorylated on Ser-172 by CDK1 during the cell cycle, from metaphase to telophase, but not in interphase. This phosphorylation inhibits tubulin incorporation into microtubules.

The protein localises to the cytoplasm. It is found in the cytoskeleton. Its function is as follows. Tubulin is the major constituent of microtubules, a cylinder consisting of laterally associated linear protofilaments composed of alpha- and beta-tubulin heterodimers. Microtubules grow by the addition of GTP-tubulin dimers to the microtubule end, where a stabilizing cap forms. Below the cap, tubulin dimers are in GDP-bound state, owing to GTPase activity of alpha-tubulin. The sequence is that of Tubulin beta-6 chain (TUBB6) from Bos taurus (Bovine).